A 146-amino-acid chain; its full sequence is Snaclec coagulation factor X-activating enzyme light chain 1 (146 aa).

The signal sequence occupies residues 1-23 (MGRFISVSFGCLVVFLSLSGTEA). Cysteine 27 and cysteine 38 are oxidised to a cystine. A C-type lectin domain is found at 34-145 (YEQHCYKGFN…CNFIAPVVCK (112 aa)). Asparagine 47 carries N-linked (GlcNAc...) (complex) asparagine glycosylation. Cystine bridges form between cysteine 55/cysteine 144 and cysteine 121/cysteine 136.

This sequence belongs to the snaclec family. As to quaternary structure, heterotrimer; disulfide-linked. The heterotrimer consists of 1 heavy chain (a metalloproteinase) and 2 light chains: LC1 and LC2. In terms of processing, N-glycosylated; probably required for conformation. Removal of easily accessible sugars does not change its functional capacity, but removal of the core sugars with N-glycanase causes a virtually complete loss of enzyme activity, apparently as a result of major conformational changes in the molecule. Not O-glycosylated. In terms of tissue distribution, expressed by the venom gland.

It is found in the secreted. In terms of biological role, regulatory subunit of the blood coagulation factor X- and IX-activating enzyme. The enzyme activates coagulation factor X (F10) by cleaving the Arg-Ile bond and is also able to activate coagulation factor IX (F9) and protein S (PROS1) by specific cleavage of Arg-Ile and Arg-Val bonds. May serve as an exosite by which the enzyme recognizes and binds to the Gla domain of factor X (F10) and factor IX (F9) in a calcium-dependent manner. In Daboia siamensis (Eastern Russel's viper), this protein is Snaclec coagulation factor X-activating enzyme light chain 1 (LC1).